Reading from the N-terminus, the 241-residue chain is Pyridoxine 5'-phosphate synthase (241 aa).

Residue asparagine 7 coordinates 3-amino-2-oxopropyl phosphate. 9–10 is a 1-deoxy-D-xylulose 5-phosphate binding site; sequence DH. Arginine 18 provides a ligand contact to 3-amino-2-oxopropyl phosphate. The active-site Proton acceptor is the histidine 43. 1-deoxy-D-xylulose 5-phosphate-binding residues include arginine 45 and histidine 50. Glutamate 70 acts as the Proton acceptor in catalysis. Position 100 (threonine 100) interacts with 1-deoxy-D-xylulose 5-phosphate. Histidine 190 functions as the Proton donor in the catalytic mechanism. Residues glycine 191 and 212–213 contribute to the 3-amino-2-oxopropyl phosphate site; that span reads GH.

This sequence belongs to the PNP synthase family. As to quaternary structure, homooctamer; tetramer of dimers.

It localises to the cytoplasm. The catalysed reaction is 3-amino-2-oxopropyl phosphate + 1-deoxy-D-xylulose 5-phosphate = pyridoxine 5'-phosphate + phosphate + 2 H2O + H(+). The protein operates within cofactor biosynthesis; pyridoxine 5'-phosphate biosynthesis; pyridoxine 5'-phosphate from D-erythrose 4-phosphate: step 5/5. Its function is as follows. Catalyzes the complicated ring closure reaction between the two acyclic compounds 1-deoxy-D-xylulose-5-phosphate (DXP) and 3-amino-2-oxopropyl phosphate (1-amino-acetone-3-phosphate or AAP) to form pyridoxine 5'-phosphate (PNP) and inorganic phosphate. The sequence is that of Pyridoxine 5'-phosphate synthase from Bordetella avium (strain 197N).